We begin with the raw amino-acid sequence, 363 residues long: Flagellar P-ring protein (363 aa).

The signal sequence occupies residues methionine 1 to alanine 20.

The protein belongs to the FlgI family. As to quaternary structure, the basal body constitutes a major portion of the flagellar organelle and consists of four rings (L,P,S, and M) mounted on a central rod.

The protein localises to the periplasm. Its subcellular location is the bacterial flagellum basal body. Assembles around the rod to form the L-ring and probably protects the motor/basal body from shearing forces during rotation. The polypeptide is Flagellar P-ring protein (Vibrio atlanticus (strain LGP32) (Vibrio splendidus (strain Mel32))).